A 360-amino-acid chain; its full sequence is Nucleoporin SEH1 (360 aa).

6 WD repeats span residues 10 to 49 (DHKDLIHDVSFDFHGRRMATCSSDQSVKVWDKSESGDWHC), 55 to 96 (THSG…SNDK), 111 to 152 (DSRT…NLSQ), 160 to 210 (SCKL…RKYA), 217 to 258 (TVTD…KELT), and 276 to 315 (NHNSQVWRVSWNITGTVLASSGDDGCVRLWKANYMDNWKC). A Glycyl lysine isopeptide (Lys-Gly) (interchain with G-Cter in SUMO2) cross-link involves residue Lys12. Residues Ser179 and Ser190 each carry the phosphoserine modification. Positions 324-354 (SPVNGSSQQGTSNPSLGSTIPSLQNSLNGSS) are enriched in polar residues. Residues 324–360 (SPVNGSSQQGTSNPSLGSTIPSLQNSLNGSSAGRKHS) form a disordered region.

The protein belongs to the WD repeat SEC13 family. As to quaternary structure, component of the Nup107-160 subcomplex of the nuclear pore complex (NPC). The Nup107-160 subcomplex includes NUP160, NUP133, NUP107, NUP98, NUP85, NUP43, NUP37, SEH1 and SEC13. The SEH1 subunit appears to be only weakly associated with the Nup107-160 subcomplex. Component of the GATOR2 subcomplex, composed of MIOS, SEC13, SEH1L, WDR24 and WDR59. The GATOR2 complex interacts with CASTOR1 and CASTOR2; the interaction is negatively regulated by arginine. The GATOR2 complex interacts with SESN1, SESN2 and SESN3; the interaction is negatively regulated by amino acids. SESN1, SESN2 and SESN3 convey leucine availability via direct interaction with SEH1L and WDR24.

It localises to the chromosome. Its subcellular location is the centromere. The protein localises to the kinetochore. The protein resides in the nucleus. It is found in the nuclear pore complex. It localises to the lysosome membrane. Its activity is regulated as follows. The GATOR2 complex is negatively regulated by the upstream amino acid sensors CASTOR1 and SESN2, which sequester the GATOR2 complex in absence of amino acids. In the presence of abundant amino acids, GATOR2 is released from CASTOR1 and SESN2 and activated. In terms of biological role, component of the Nup107-160 subcomplex of the nuclear pore complex (NPC). The Nup107-160 subcomplex is required for the assembly of a functional NPC. The Nup107-160 subcomplex is also required for normal kinetochore microtubule attachment, mitotic progression and chromosome segregation. This subunit plays a role in recruitment of the Nup107-160 subcomplex to the kinetochore. Its function is as follows. As a component of the GATOR2 complex, functions as an activator of the amino acid-sensing branch of the mTORC1 signaling pathway. The GATOR2 complex indirectly activates mTORC1 through the inhibition of the GATOR1 subcomplex. GATOR2 probably acts as an E3 ubiquitin-protein ligase toward GATOR1. In the presence of abundant amino acids, the GATOR2 complex mediates ubiquitination of the NPRL2 core component of the GATOR1 complex, leading to GATOR1 inactivation. In the absence of amino acids, GATOR2 is inhibited, activating the GATOR1 complex. Within the GATOR2 complex, SEC13 and SEH1L are required to stabilize the complex. The chain is Nucleoporin SEH1 (SEH1L) from Homo sapiens (Human).